Reading from the N-terminus, the 613-residue chain is Transcription factor MTB1 (613 aa).

The interval 48 to 130 is JAZ-interaction domain; sequence LQNKLSDLVE…RVLQKLHMLF (83 aa). Disordered regions lie at residues 256–285 and 391–441; these read EKNEGNNPRLSNSGAVTERTDGNPKIFGHD and AHNV…AERQ. The span at 260–270 shows a compositional bias: polar residues; it reads GNNPRLSNSGA. Composition is skewed to basic and acidic residues over residues 394–417 and 427–441; these read VESEHSDVEASCKEDRAGPVDEKR and NGREEPLNHVEAERQ. Residues 430 to 443 form a basic motif; degenerate region; it reads EEPLNHVEAERQRR. Residues 430–479 form the bHLH domain; it reads EEPLNHVEAERQRREKLNQRFYALRAVVPNISKMDKASLLGDAIAYITEL. Residues 444-479 are helix-loop-helix motif; sequence EKLNQRFYALRAVVPNISKMDKASLLGDAIAYITEL. A disordered region spans residues 490–513; sequence RELRLGSTSRDAITSEDSPSSEIQ. A compositionally biased stretch (polar residues) spans 495 to 512; it reads GSTSRDAITSEDSPSSEI.

In terms of assembly, interacts with MYC2 (via N-terminus). MTB1 competes with MED25 for binding to MYC2. Interacts (via N-terminus) with JAZ7.

The protein resides in the nucleus. In terms of biological role, transcription factor that negatively regulates jasmonate (JA) signaling. Negatively regulates JA-dependent response to wounding, JA-induced expression of defense genes, JA-dependent responses against herbivorous insects, and JA-dependent resistance against Botrytis cinerea infection. Plays a positive role in resistance against the bacterial pathogen Pseudomonas syringae pv tomato DC3000. This Solanum lycopersicum (Tomato) protein is Transcription factor MTB1.